The chain runs to 532 residues: Muscarinic acetylcholine receptor M5 (532 aa).

Residues 1-29 (MEGDSYHNATTVNGTPVYHQPLERHRLWE) are Extracellular-facing. A glycan (N-linked (GlcNAc...) asparagine) is linked at asparagine 8. The chain crosses the membrane as a helical span at residues 30–53 (VISIAAVTAVVSLITIVGNVLVMI). Residues 54–66 (SFKVNSQLKTVNN) lie on the Cytoplasmic side of the membrane. A helical membrane pass occupies residues 67–87 (YYLLSLACADLIIGIFSMNLY). Over 88-104 (TTYILMGRWALGSLACD) the chain is Extracellular. Residues cysteine 103 and cysteine 183 are joined by a disulfide bond. A helical membrane pass occupies residues 105-126 (LWLALDYVASNASVMNLLVISF). Residues 127–146 (DRYFSITRPLTYRAKRTPKR) are Cytoplasmic-facing. The chain crosses the membrane as a helical span at residues 147–169 (AGVMIGLAWLISFILWAPAILCW). Residues 170-191 (QYLVGKRTVPLDECQIQFLSEP) lie on the Extracellular side of the membrane. Residues 192 to 214 (TITFGTAIAAFYIPVSVMTILYC) form a helical membrane-spanning segment. Residues 215–443 (RIYRETEKRT…LVKERKAAQT (229 aa)) are Cytoplasmic-facing. The segment at 262 to 365 (AQRERNQTSW…SDTPNYFLSP (104 aa)) is disordered. Over residues 269–281 (TSWSSSRRSASTS) the composition is skewed to low complexity. Polar residues predominate over residues 282–308 (GKPSQATDPSTNQAKAEQLTTCSSYPS). A helical transmembrane segment spans residues 444–464 (LSAILLAFIITWTPYNIMVLV). Topologically, residues 465–478 (STFCDKCVPVTLWH) are extracellular. A helical membrane pass occupies residues 479–498 (LGYWLCYVNSTVNPICYALC). Residues 499–532 (NRTFRKTFKMLLLCRWKKKKVEEKLYWQGNSKLP) lie on the Cytoplasmic side of the membrane. Phosphothreonine occurs at positions 501 and 505.

This sequence belongs to the G-protein coupled receptor 1 family. Muscarinic acetylcholine receptor subfamily. CHRM5 sub-subfamily.

The protein resides in the cell membrane. Its subcellular location is the postsynaptic cell membrane. The muscarinic acetylcholine receptor mediates various cellular responses, including inhibition of adenylate cyclase, breakdown of phosphoinositides and modulation of potassium channels through the action of G proteins. Primary transducing effect is Pi turnover. The protein is Muscarinic acetylcholine receptor M5 (CHRM5) of Macaca mulatta (Rhesus macaque).